Consider the following 417-residue polypeptide: Gamma-glutamyl phosphate reductase (417 aa).

Belongs to the gamma-glutamyl phosphate reductase family.

Its subcellular location is the cytoplasm. The catalysed reaction is L-glutamate 5-semialdehyde + phosphate + NADP(+) = L-glutamyl 5-phosphate + NADPH + H(+). It participates in amino-acid biosynthesis; L-proline biosynthesis; L-glutamate 5-semialdehyde from L-glutamate: step 2/2. Functionally, catalyzes the NADPH-dependent reduction of L-glutamate 5-phosphate into L-glutamate 5-semialdehyde and phosphate. The product spontaneously undergoes cyclization to form 1-pyrroline-5-carboxylate. In Escherichia coli O6:K15:H31 (strain 536 / UPEC), this protein is Gamma-glutamyl phosphate reductase.